We begin with the raw amino-acid sequence, 428 residues long: Serine--tRNA ligase (428 aa).

Residue 231–233 (TAE) participates in L-serine binding. Residue 262–264 (RSE) participates in ATP binding. Glu-285 provides a ligand contact to L-serine. 349–352 (EISS) is an ATP binding site. Ser-385 contributes to the L-serine binding site.

The protein belongs to the class-II aminoacyl-tRNA synthetase family. Type-1 seryl-tRNA synthetase subfamily. As to quaternary structure, homodimer. The tRNA molecule binds across the dimer.

The protein resides in the cytoplasm. The enzyme catalyses tRNA(Ser) + L-serine + ATP = L-seryl-tRNA(Ser) + AMP + diphosphate + H(+). It catalyses the reaction tRNA(Sec) + L-serine + ATP = L-seryl-tRNA(Sec) + AMP + diphosphate + H(+). The protein operates within aminoacyl-tRNA biosynthesis; selenocysteinyl-tRNA(Sec) biosynthesis; L-seryl-tRNA(Sec) from L-serine and tRNA(Sec): step 1/1. Functionally, catalyzes the attachment of serine to tRNA(Ser). Is also able to aminoacylate tRNA(Sec) with serine, to form the misacylated tRNA L-seryl-tRNA(Sec), which will be further converted into selenocysteinyl-tRNA(Sec). The polypeptide is Serine--tRNA ligase (Staphylococcus aureus (strain Mu3 / ATCC 700698)).